Consider the following 139-residue polypeptide: uncharacterized protein (139 aa).

This is an uncharacterized protein from Saccharolobus islandicus (Sulfolobus islandicus).